The sequence spans 492 residues: Catalase (492 aa).

Catalysis depends on residues His65 and Asn138. Tyr348 is a binding site for heme.

The protein belongs to the catalase family. Homotetramer. Heme is required as a cofactor. As to expression, in stems, leaves, roots and developing fruits.

It localises to the cytoplasm. The protein resides in the cytosol. The protein localises to the peroxisome matrix. The catalysed reaction is 2 H2O2 = O2 + 2 H2O. Functionally, catalyzes the degradation of hydrogen peroxide (H(2)O(2)) generated by peroxisomal oxidases to water and oxygen, thereby protecting cells from the toxic effects of hydrogen peroxide. The protein is Catalase (CAT) of Capsicum annuum (Capsicum pepper).